The chain runs to 351 residues: Cytoplasmic dynein 2 light intermediate chain 1 (351 aa).

A disordered region spans residues Thr-304–Gln-335. Residues Asp-323–Gln-335 are compositionally biased toward basic and acidic residues.

The protein belongs to the dynein light intermediate chain family. In terms of assembly, light intermediate chain of the cytoplasmic dynein complex 2, a multisubunit complex composed at least of eleven different proteins. The cytoplasmic dynein 2 complex consists of two catalytic heavy chains (HCs) and a number of non-catalytic subunits presented by intermediate chains (ICs), light intermediate chains (LICs) and light chains (LCs). Among them, a heavy chain (DYNC2H1), two intermediate chains (DYNC2I2 and DYNC2I1), a light intermediate chain (DYNC2LI1), and a light chain (DYNLT2B) are unique to the dynein-2 complex, but a subset of light chains are also shared by dynein-1 and dynein-2 complexes. Dynein-2 complex is built around two copies of cytoplasmic dynein 2 heavy chain 1 (DYNC2H1). The C-terminal region forms the motor domain, which converts the energy from ATP hydrolysis into movement. Its N-terminal region forms the tail, an extended structure that binds the other subunits and holds the two heavy chains in a homodimer. Interacts with DYNC2H1 (via N-terminus); this interaction stabilizes the dynein-2 complex structure.

The protein resides in the cytoplasm. It localises to the cell projection. It is found in the cilium. Its subcellular location is the cytoskeleton. The protein localises to the cilium basal body. The protein resides in the cilium axoneme. It localises to the microtubule organizing center. It is found in the centrosome. Its function is as follows. Acts as one of several non-catalytic accessory components of the cytoplasmic dynein 2 complex (dynein-2 complex), a motor protein complex that drives the movement of cargos along microtubules within cilia and flagella in concert with the intraflagellar transport (IFT) system, facilitating the assembly of these organelles. Involved in the regulation of ciliary length. The chain is Cytoplasmic dynein 2 light intermediate chain 1 (Dync2li1) from Rattus norvegicus (Rat).